The primary structure comprises 284 residues: 4-hydroxybenzoate octaprenyltransferase (284 aa).

The next 8 membrane-spanning stretches (helical) occupy residues 18–38, 42–62, 93–113, 136–156, 161–181, 209–229, 233–253, and 264–284; these read PIGT…AAEG, WHVL…GCVI, IILF…MNPL, HLPQ…AWAA, LPWV…AYDT, LIIG…GLHY, QSFY…QHLI, and AFLN…VAFW.

This sequence belongs to the UbiA prenyltransferase family. Requires Mg(2+) as cofactor.

It localises to the cell inner membrane. The catalysed reaction is all-trans-octaprenyl diphosphate + 4-hydroxybenzoate = 4-hydroxy-3-(all-trans-octaprenyl)benzoate + diphosphate. Its pathway is cofactor biosynthesis; ubiquinone biosynthesis. Catalyzes the prenylation of para-hydroxybenzoate (PHB) with an all-trans polyprenyl group. Mediates the second step in the final reaction sequence of ubiquinone-8 (UQ-8) biosynthesis, which is the condensation of the polyisoprenoid side chain with PHB, generating the first membrane-bound Q intermediate 3-octaprenyl-4-hydroxybenzoate. This Vibrio vulnificus (strain CMCP6) protein is 4-hydroxybenzoate octaprenyltransferase.